Here is a 361-residue protein sequence, read N- to C-terminus: Free fatty acid receptor 4 (361 aa).

The tract at residues 1-21 (MSPECAQTTGPGPSRTPDQVN) is disordered. At 1 to 45 (MSPECAQTTGPGPSRTPDQVNRTHFPFFSDVKGDHRLVLSVLETT) the chain is on the extracellular side. Asparagine 21 is a glycosylation site (N-linked (GlcNAc...) asparagine). A helical membrane pass occupies residues 46-66 (VLGLIFVVSLLGNVCALVLVV). Residues 67-77 (RRRRRGATVSL) lie on the Cytoplasmic side of the membrane. The chain crosses the membrane as a helical span at residues 78–98 (VLNLFCADLLFTSAIPLVLVV). Residues 99–103 (RWTEA) lie on the Extracellular side of the membrane. The chain crosses the membrane as a helical span at residues 104–124 (WLLGPVVCHLLFYVMTMSGSV). A disulfide bond links cysteine 111 and cysteine 194. Residues 125 to 156 (TILTLAAVSLERMVCIVRLRRGLSGPGRRTQA) lie on the Cytoplasmic side of the membrane. Residues 157–177 (ALLAFIWGYSALAALPLCILF) traverse the membrane as a helical segment. Topologically, residues 178–204 (RVVPQRLPGGDQEIPICTLDWPNRIGE) are extracellular. The chain crosses the membrane as a helical span at residues 205 to 225 (ISWDVFFVTLNFLVPGLVIVI). At 226-268 (SYSKILQITKASRKRLTLSLAYSESHQIRVSQQDYRLFRTLFL) the chain is on the cytoplasmic side. Residues 269-289 (LMVSFFIMWSPIIITILLILI) traverse the membrane as a helical segment. Residues 290–295 (QNFRQD) lie on the Extracellular side of the membrane. The helical transmembrane segment at 296–316 (LVIWPSLFFWVVAFTFANSAL) threads the bilayer. Residues 317–361 (NPILYNMSLFRSEWRKIFCCFFFPEKGAIFTETSIRRNDLSVIST) lie on the Cytoplasmic side of the membrane. 2 positions are modified to phosphothreonine: threonine 347 and threonine 349. A phosphoserine mark is found at serine 350, serine 357, and serine 360.

Belongs to the G-protein coupled receptor 1 family. In terms of assembly, interacts (via C-terminus) with ARRB2 following LCFAs stimulation. Phosphorylated at two clusters of Ser and Thr residues located in the intracellular C-terminus. Prerequisite for FFAR4 internalization via an ARRB2-dependent pathway.

The protein localises to the cell membrane. It localises to the endosome membrane. It is found in the lysosome membrane. The protein resides in the cell projection. Its subcellular location is the cilium membrane. G-protein-coupled receptor for long-chain fatty acids (LCFAs) with a major role in adipogenesis, energy metabolism and inflammation. Signals via G-protein and beta-arrestin pathways. LCFAs sensing initiates activation of phosphoinositidase C-linked G proteins GNAQ and GNA11 (G(q)/G(11)), inducing a variety of cellular responses via second messenger pathways such as intracellular calcium mobilization, modulation of cyclic adenosine monophosphate (cAMP) production, and mitogen-activated protein kinases (MAPKs). After LCFAs binding, associates with beta-arrestin ARRB2 that acts as an adapter protein coupling the receptor to specific downstream signaling pathways, as well as mediating receptor endocytosis. In response to dietary fats, plays an important role in the regulation of adipocyte proliferation and differentiation. Acts as a receptor for omega-3 polyunsaturated fatty acids (PUFAs) at primary cilium of perivascular preadipocytes, initiating an adipogenic program via cAMP and CTCF-dependent chromatin remodeling that ultimately results in transcriptional activation of adipogenic genes and cell cycle entry. Induces differentiation of brown and beige adipocytes probably via autocrine and endocrine functions of FGF21 hormone. Contributes to the thermogenic activation of brown adipose tissue and the browning of white adipose tissue. Activates brown adipocytes by initiating intracellular calcium signaling leading to mitochondrial depolarization and fission, and overall increased mitochondrial respiration. Consequently stimulates fatty acid uptake and oxidation in mitochondria together with UCP1-mediated thermogenic respiration, eventually reducing fat mass. Regulates bi-potential differentiation of bone marrow mesenchymal stem cells toward osteoblasts or adipocytes likely by up-regulating distinct integrins. In response to dietary fats regulates hormone secretion and appetite. Stimulates GIP and GLP1 secretion from enteroendocrine cells as well as GCG secretion in pancreatic alpha cells, thereby playing a role in the regulation of blood glucose levels. Negatively regulates glucose-induced SST secretion in pancreatic delta cells. Mediates LCFAs inhibition of GHRL secretion, an appetite-controlling hormone. In taste buds, contributes to sensing of dietary fatty acids by the gustatory system. During the inflammatory response, promotes anti-inflammatory M2 macrophage differentiation in adipose tissue. Mediates the anti-inflammatory effects of omega-3 PUFAs via inhibition of NLRP3 inflammasome activation. In this pathway, interacts with adapter protein ARRB2 and inhibits the priming step triggered by Toll-like receptors (TLRs) at the level of TAK1 and TAB1. Further inhibits the activation step when ARRB2 directly associates with NLRP3, leading to inhibition of pro-inflammatory cytokine release. Mediates LCFAs anti-apoptotic effects. This Rattus norvegicus (Rat) protein is Free fatty acid receptor 4 (Ffar4).